Here is a 325-residue protein sequence, read N- to C-terminus: tRNA (guanine-N(7)-)-methyltransferase (325 aa).

Positions M1–M101 are disordered. The segment covering V51–I69 has biased composition (polar residues). Residues G122, E145–I146, N199–A200, and C219 contribute to the S-adenosyl-L-methionine site. D222 is a catalytic residue. Residue T297–E299 coordinates S-adenosyl-L-methionine.

This sequence belongs to the class I-like SAM-binding methyltransferase superfamily. TrmB family. Forms a complex with TRM82.

The protein localises to the nucleus. The enzyme catalyses guanosine(46) in tRNA + S-adenosyl-L-methionine = N(7)-methylguanosine(46) in tRNA + S-adenosyl-L-homocysteine. It functions in the pathway tRNA modification; N(7)-methylguanine-tRNA biosynthesis. In terms of biological role, catalyzes the formation of N(7)-methylguanine at position 46 (m7G46) in tRNA. This Candida albicans (strain SC5314 / ATCC MYA-2876) (Yeast) protein is tRNA (guanine-N(7)-)-methyltransferase.